A 734-amino-acid chain; its full sequence is MASRFPKFSRGLSQDPTTRRIWFGIATAHDFESHDDMTEERLYQKIFASHFGQLAIIFLWTSGNLFHVAWQGNFEAWGQDPLHVRPIAHAIWDPHFGQPAVEAFTRGGASGPVNIAYSGVYQWWYTIGLRTNQDLYGGSIFLLFVSALFLIAGWLHLQPKWKPSVSWFKNAESRLNHHLSGLFGVSSLAWTGHLVHVAIPESRGEHVRWNNLLTALPHPQGLGPFFAGQWNVYAQNPDSNSHLFGTSEGAGTAILTFLGGFHPQTQSLWLTDMAHHHLAIAVIFIIAGHMYRTNFGIGHSMKEILEAHTPPGGRLGRGHKGLYDTINNSLHFQLGLALASLGVITSLVAQHMYSLPPYAFLAQDFTTQAALYTHHQYIAGFIMTGAFAHGAIFFIRDYNPEQNKDNVLARMLEHKEAIISHLSWASLFLGFHTLGLYVHNDVMLAFGTPEKQILIEPVFAQWIQSAHGKALYGFDVLLSSADSPAFNAGQTLWLPGWLDAINNNSNSLFLTIGPGDFLVHHAIALGLHTTTLILVKGALDARGSKLMPDKKEFGYSFPCDGPGRGGTCDISAWDAFYLAVFWMLNTIGWVTFYWHWKHITLWQGNVAQFNESSTYLMGWLRDYLWLNSSQLINGYNPFGMNSLSVWAWMFLFGHLVWATGFMFLISWRGYWQELIETLAWAHERTPLANLVRWKDKPVALSIVQARLVGLAHFSVGYIFTYAAFLIASTSGKFG.

A run of 8 helical transmembrane segments spans residues 46–69, 135–158, 175–199, 273–291, 330–353, 369–395, 417–439, and 517–535; these read IFAS…FHVA, LYGG…LHLQ, LNHH…HVAI, MAHH…GHMY, LHFQ…QHMY, AALY…IFFI, AIIS…LYVH, and FLVH…LILV. The [4Fe-4S] cluster site is built by Cys559 and Cys568. 2 consecutive transmembrane segments (helical) span residues 575–596 and 643–665; these read AFYL…YWHW and LSVW…MFLI. 3 residues coordinate chlorophyll a: His654, Met662, and Tyr670. Trp671 contributes to the phylloquinone binding site. The helical transmembrane segment at 707–727 threads the bilayer; the sequence is LVGLAHFSVGYIFTYAAFLIA.

Belongs to the PsaA/PsaB family. In terms of assembly, the PsaA/B heterodimer binds the P700 chlorophyll special pair and subsequent electron acceptors. PSI consists of a core antenna complex that captures photons, and an electron transfer chain that converts photonic excitation into a charge separation. The eukaryotic PSI reaction center is composed of at least 11 subunits. P700 is a chlorophyll a/chlorophyll a' dimer, A0 is one or more chlorophyll a, A1 is one or both phylloquinones and FX is a shared 4Fe-4S iron-sulfur center. serves as cofactor.

The protein localises to the plastid. It localises to the chloroplast thylakoid membrane. The enzyme catalyses reduced [plastocyanin] + hnu + oxidized [2Fe-2S]-[ferredoxin] = oxidized [plastocyanin] + reduced [2Fe-2S]-[ferredoxin]. In terms of biological role, psaA and PsaB bind P700, the primary electron donor of photosystem I (PSI), as well as the electron acceptors A0, A1 and FX. PSI is a plastocyanin-ferredoxin oxidoreductase, converting photonic excitation into a charge separation, which transfers an electron from the donor P700 chlorophyll pair to the spectroscopically characterized acceptors A0, A1, FX, FA and FB in turn. Oxidized P700 is reduced on the lumenal side of the thylakoid membrane by plastocyanin. This Physcomitrium patens (Spreading-leaved earth moss) protein is Photosystem I P700 chlorophyll a apoprotein A2.